The chain runs to 232 residues: WFLEYSTSECHFYNGTQRVRLLERYFYNLEENLRFDSDVGEFRAVTELGRPDAENWNSQPEFLEQRRAAVDTYCRHNYEILDKFLVPRRVEPTVTVYPTKTQPLEHHNLLVCSVSDFYPGNIEVRWFRNGKEEKTGIVSTGLVRNGDWTFQTLVMLETVPQSGEVYTCQVEHPSLTDPVTVEWKAQSTSAQNKMLSGVGGFVLGLLFLGAGLFIYFRNQKGQSGLQPTGLLS.

The tract at residues 1 to 90 is beta-1; it reads WFLEYSTSEC…LDKFLVPRRV (90 aa). Residues 1-193 are Extracellular-facing; the sequence is WFLEYSTSEC…KAQSTSAQNK (193 aa). Disulfide bonds link cysteine 10-cysteine 74 and cysteine 112-cysteine 168. Residue asparagine 14 is glycosylated (N-linked (GlcNAc...) asparagine). Residues 91-193 form a beta-2 region; that stretch reads EPTVTVYPTK…KAQSTSAQNK (103 aa). The Ig-like C1-type domain occupies 92-182; the sequence is PTVTVYPTKT…PSLTDPVTVE (91 aa). Residues 194-216 form a helical membrane-spanning segment; that stretch reads MLSGVGGFVLGLLFLGAGLFIYF. Residues 217–232 are Cytoplasmic-facing; it reads RNQKGQSGLQPTGLLS.

The protein belongs to the MHC class II family. Post-translationally, ubiquitinated in immature dendritic cells leading to down-regulation of MHC class II.

It localises to the membrane. The polypeptide is H-2 class II histocompatibility antigen, E-S beta chain (H2-Eb1) (Mus musculus (Mouse)).